A 274-amino-acid chain; its full sequence is Triosephosphate isomerase (274 aa).

13–15 (NWK) contacts substrate. Residue His98 is the Electrophile of the active site. Residue Glu170 is the Proton acceptor of the active site. Substrate-binding residues include Gly176 and Ser216.

It belongs to the triosephosphate isomerase family. As to quaternary structure, homodimer.

The protein resides in the cytoplasm. The enzyme catalyses D-glyceraldehyde 3-phosphate = dihydroxyacetone phosphate. Its pathway is carbohydrate biosynthesis; gluconeogenesis. The protein operates within carbohydrate degradation; glycolysis; D-glyceraldehyde 3-phosphate from glycerone phosphate: step 1/1. Functionally, involved in the gluconeogenesis. Catalyzes stereospecifically the conversion of dihydroxyacetone phosphate (DHAP) to D-glyceraldehyde-3-phosphate (G3P). The chain is Triosephosphate isomerase from Aster yellows witches'-broom phytoplasma (strain AYWB).